The sequence spans 459 residues: Cysteine--tRNA ligase (459 aa).

Cysteine 28 contributes to the Zn(2+) binding site. The 'HIGH' region signature appears at valine 30–histidine 40. The Zn(2+) site is built by cysteine 209, histidine 234, and glutamate 238. The short motif at lysine 266 to serine 270 is the 'KMSKS' region element. Lysine 269 contacts ATP.

This sequence belongs to the class-I aminoacyl-tRNA synthetase family. Monomer. Requires Zn(2+) as cofactor.

Its subcellular location is the cytoplasm. It catalyses the reaction tRNA(Cys) + L-cysteine + ATP = L-cysteinyl-tRNA(Cys) + AMP + diphosphate. This chain is Cysteine--tRNA ligase, found in Histophilus somni (strain 2336) (Haemophilus somnus).